The primary structure comprises 741 residues: Moderate conductance mechanosensitive channel YbiO (741 aa).

The signal sequence occupies residues 1–18 (MRWILFILFCLLGAPAHA). The interval 22 to 42 (PGVTTTTTTDSTTEPAPEPDI) is disordered. Residues 25-34 (TTTTTTDSTT) show a composition bias toward low complexity. 11 helical membrane passes run 143–163 (MLAVLVFGFYWLIRLCALPLY), 185–205 (AMIIGAFIIDLLLLALTLFVG), 225–245 (LFLNAFALIEFFKAVLRLIFC), 268–288 (LSWLSSLIGYGLIVAVPIISN), 294–314 (IGALANVIIMLCMTVWALYLI), 343–363 (FALVWHWLASAYFIVLFFFSL), 372–392 (FMMGATVRSLAIIGIAAFVSG), 432–452 (ILTVCVAVMLLLSAWGLFDFW), 466–486 (ILIRIALILFFSAVGWTVLAS), 509–529 (LLTLFRNALAVIISTITIMIV), and 533–553 (IGVNIAPLLAGAGALGLAISF).

Belongs to the MscS (TC 1.A.23) family. In terms of assembly, homoheptamer.

The protein resides in the cell inner membrane. Its function is as follows. Mechanosensitive channel that protects cells against hypoosmotic stress when highly overexpressed. The chain is Moderate conductance mechanosensitive channel YbiO (ybiO) from Escherichia coli (strain K12).